We begin with the raw amino-acid sequence, 134 residues long: Small ribosomal subunit protein uS9 (134 aa).

Residues 113-134 (REVERKKYGLKKARRAPQFSKR) form a disordered region. Positions 120-134 (YGLKKARRAPQFSKR) are enriched in basic residues.

The protein belongs to the universal ribosomal protein uS9 family.

This chain is Small ribosomal subunit protein uS9 (rpsI), found in Thermotoga maritima (strain ATCC 43589 / DSM 3109 / JCM 10099 / NBRC 100826 / MSB8).